Here is a 94-residue protein sequence, read N- to C-terminus: Large ribosomal subunit protein bL27 (94 aa).

The interval 1–25 (MAHKKGTGSTRNGRDSQSKRLGVKR) is disordered.

Belongs to the bacterial ribosomal protein bL27 family.

In Gloeothece citriformis (strain PCC 7424) (Cyanothece sp. (strain PCC 7424)), this protein is Large ribosomal subunit protein bL27.